A 1299-amino-acid polypeptide reads, in one-letter code: MAP3K epsilon protein kinase 1 (1299 aa).

The 255-residue stretch at 20–274 (YMLGDEIGKG…AKTLLSHPWI (255 aa)) folds into the Protein kinase domain. HEAT repeat units follow at residues 25–62 (EIGK…EDLN) and 86–125 (LKTK…TVYI). Residues 26–34 (IGKGAYGRV) and Lys-49 contribute to the ATP site. Asp-144 functions as the Proton acceptor in the catalytic mechanism. Residues 218–256 (PYYDLQPMPALFRIVQDDSPPIPDSLSPDITDFLRQCFK) form an HEAT 3 repeat. Disordered regions lie at residues 291–458 (IRYM…GNEL) and 483–509 (GKLN…DGGK). Over residues 374–385 (SSLQSSTCSISS) the composition is skewed to low complexity. Polar residues-rich tracts occupy residues 415-432 (ATKQ…QRSH) and 488-501 (ASAS…NQGD). HEAT repeat units follow at residues 532–570 (SNDG…LLPL), 611–649 (VFVT…DNID), 653–694 (NACL…SSSL), 698–736 (MFIA…VFKL), 743–780 (NDFC…SGQL), 781–820 (DQHE…PDGD), 868–900 (QPEQ…HIAG), 901–939 (LEKH…AASA), 955–994 (SDTS…ADTT), 998–1036 (YMCS…DPNC), 1043–1081 (ADAI…INKR), 1085–1122 (QAAE…ASRN), 1125–1164 (EQLR…NDNR), 1186–1210 (CPER…RINT), 1211–1249 (TLAV…HHPR), and 1279–1299 (QVLV…NTVL). Positions 795–852 (VLKTRPGGGEEPSNSQRSDLYQPDGDRPRSSSAALDATEDVKQHHRISISSNRTSTDK) are disordered.

Belongs to the protein kinase superfamily. Ser/Thr protein kinase family. Autophosphorylated. Expressed in both the sporophytic and the gametophytic tissues, especially in dividing cells.

It localises to the cytoplasm. It is found in the cytoskeleton. The protein resides in the microtubule organizing center. The protein localises to the nucleus. Its subcellular location is the nucleolus. It localises to the cell membrane. The enzyme catalyses L-seryl-[protein] + ATP = O-phospho-L-seryl-[protein] + ADP + H(+). The catalysed reaction is L-threonyl-[protein] + ATP = O-phospho-L-threonyl-[protein] + ADP + H(+). Serine/threonine-protein kinase involved in the spatial and temporal control system organizing cortical activities in mitotic and postmitotic cells. Required for the normal functioning of the plasma membrane in developing pollen. Involved in the regulation of cell expansion and embryo development. This is MAP3K epsilon protein kinase 1 from Brassica napus (Rape).